Consider the following 212-residue polypeptide: Cytidylate kinase (212 aa).

Position 7-15 (7-15) interacts with ATP; sequence GPAASGKGT.

It belongs to the cytidylate kinase family. Type 1 subfamily.

The protein localises to the cytoplasm. The catalysed reaction is CMP + ATP = CDP + ADP. The enzyme catalyses dCMP + ATP = dCDP + ADP. This Rhodopseudomonas palustris (strain BisB5) protein is Cytidylate kinase.